We begin with the raw amino-acid sequence, 2303 residues long: Adenomatous polyposis coli protein 2 (2303 aa).

The stretch at 8 to 59 forms a coiled coil; it reads YEQLVRQVEALKAENSHLRQELRDNSSHLSKLETETSGMKEVLKHLQGKLEQ. 2 disordered regions span residues 94-120 and 247-270; these read PTLG…KDSF and VPVD…QPGN. ARM repeat units follow at residues 302–341, 479–518, 522–562, 566–609, 615–654, and 657–696; these read PESC…PGAK, ANKA…NLSW, INSK…NLSA, ENKA…NVSS, EDYR…NLSA, and ARDQ…NLLA. 2 disordered regions span residues 744 to 764 and 816 to 835; these read KQGP…LRHL and LART…DTSG. Positions 825-834 are enriched in basic and acidic residues; it reads GGKEAEKDTS. Residues 840–864 are a coiled coil; sequence AAKAKAKLALAVARIDQLVEDISAL. Disordered stretches follow at residues 867–908, 953–986, 1069–1152, and 1173–1228; these read SSDD…AGSR, RRED…ATSA, RCSS…ENYV, and SPSI…EATQ. Residues 869 to 878 show a composition bias toward low complexity; the sequence is DDSFSLSSGD. Repeat unit 1 spans residues 1058–1077; sequence LAAQEGPLSLSRCSSLSSLS. The tract at residues 1058-1587 is 5 X 20 AA approximate repeat of F-X-V-E-X-T-P-X-C-F-S-R-X-S-S-L-S-S-L-S; sequence LAAQEGPLSL…SLSSSASSLS (530 aa). The segment at 1058 to 1587 is interaction with CTNNB1; that stretch reads LAAQEGPLSL…SLSSSASSLS (530 aa). The span at 1069–1084 shows a compositional bias: low complexity; the sequence is RCSSLSSLSSAGRPGP. The span at 1088–1101 shows a compositional bias: acidic residues; it reads GDLDDSDSSLEGLE. A compositionally biased stretch (polar residues) spans 1143–1152; that stretch reads TPSSSSENYV. Copy 2 of the repeat occupies 1150 to 1169; that stretch reads NYVQETPLVLSRCSSVSSLG. The span at 1173–1186 shows a compositional bias: low complexity; that stretch reads SPSIASSIPSEPCS. Over residues 1202–1212 the composition is skewed to polar residues; that stretch reads PGQTMPPSRSK. The stretch at 1263–1282 is repeat 3; that stretch reads FTVEKPDENFSCASSLSALA. 5 disordered regions span residues 1307 to 1335, 1382 to 1497, 1510 to 1684, 1724 to 2031, and 2046 to 2232; these read GAGG…PRGA, PAQE…QSLC, YGND…LDSV, LSVG…RGRP, and LRAA…DVDG. The span at 1390–1410 shows a compositional bias: polar residues; sequence TDSAEGTPVNFSSAASLSDET. Copy 4 of the repeat occupies 1391 to 1410; the sequence is DSAEGTPVNFSSAASLSDET. 2 stretches are compositionally biased toward basic and acidic residues: residues 1477 to 1489 and 1537 to 1548; these read ADKD…RTRG and FTRERPQGRKEA. Copy 5 of the repeat occupies 1568–1587; that stretch reads LIADETPPCYSLSSSASSLS. Over residues 1578–1589 the composition is skewed to low complexity; that stretch reads SLSSSASSLSEP. Serine 1585 and serine 1587 each carry phosphoserine. Positions 1638–1654 are enriched in basic residues; sequence PRRRPPVSGLRRRKPRA. 2 stretches are compositionally biased toward basic and acidic residues: residues 1655–1671 and 1739–1755; these read TRLD…RGEE and RQAE…EKRG. Positions 1819 to 1830 are enriched in low complexity; it reads APPCLAQPAAPA. Positions 1821 to 1900 are required for localization to microtubules and function in microtubule stabilization; it reads PCLAQPAAPA…PPVTQAAGAL (80 aa). A compositionally biased stretch (polar residues) spans 1851 to 1860; that stretch reads ELATLSQPPR. 5 stretches are compositionally biased toward low complexity: residues 1868–1886, 1971–1984, 2011–2026, 2049–2062, and 2113–2123; these read LAKT…SQPL, GLVR…SGSE, LSSA…GASP, APRQ…QRPP, and GAVPAAPASAD. The interval 2067–2144 is interaction with MAPRE1 and MAPRE3; sequence SPGERPARRT…PLPRVAAPGT (78 aa). The span at 2124–2135 shows a compositional bias: basic and acidic residues; it reads AARRSSDGEPRP. Residues 2200 to 2209 show a composition bias toward polar residues; it reads KTNSSTSPSL.

This sequence belongs to the adenomatous polyposis coli (APC) family. As to quaternary structure, interacts with PSRC1. Interacts with APC. Interacts with CTNNB1. Interacts with MAPRE1 and MAPRE3. Interacts with TP53BP. Interacts possibly with AXIN2. In terms of tissue distribution, widely expressed (at protein level). Specifically expressed in the CNS.

It localises to the cytoplasm. The protein resides in the cytoskeleton. The protein localises to the golgi apparatus. Its subcellular location is the perinuclear region. In terms of biological role, stabilizes microtubules and may regulate actin fiber dynamics through the activation of Rho family GTPases. May also function in Wnt signaling by promoting the rapid degradation of CTNNB1. In Homo sapiens (Human), this protein is Adenomatous polyposis coli protein 2.